Here is a 128-residue protein sequence, read N- to C-terminus: Large ribosomal subunit protein bL19 (128 aa).

This sequence belongs to the bacterial ribosomal protein bL19 family.

Functionally, this protein is located at the 30S-50S ribosomal subunit interface and may play a role in the structure and function of the aminoacyl-tRNA binding site. This chain is Large ribosomal subunit protein bL19, found in Caldicellulosiruptor bescii (strain ATCC BAA-1888 / DSM 6725 / KCTC 15123 / Z-1320) (Anaerocellum thermophilum).